Here is a 349-residue protein sequence, read N- to C-terminus: 2-oxoglutarate-Fe(II) type oxidoreductase ppzD (349 aa).

Residues 200-311 enclose the Fe2OG dioxygenase domain; sequence NTSELRLNHY…RYSVAYFGKP (112 aa). His-227, Asp-229, and His-287 together coordinate Fe cation. Arg-302 is a 2-oxoglutarate binding site.

This sequence belongs to the iron/ascorbate-dependent oxidoreductase family. The cofactor is Fe(2+).

It catalyses the reaction L-proline + 2-oxoglutarate + O2 = trans-4-hydroxy-L-proline + succinate + CO2. The catalysed reaction is L-proline + 2-oxoglutarate + O2 = trans-3-hydroxy-L-proline + succinate + CO2. It carries out the reaction D-proline + 2-oxoglutarate + O2 = cis-4-hydroxy-D-proline + succinate + CO2. Its pathway is secondary metabolite biosynthesis. 2-oxoglutarate-Fe(II) type oxidoreductase; part of the gene cluster that mediates the biosynthesis of pyrrolopyrazines, secondary metabolites showing insecticidal activity. Within the pathway, ppzD converts L-proline into trans-4-hydroxy-L-proline as a major product, yielding a key precursor for peramine biosynthesis. PpzD is also able to convert L-proline into trans-3-hydroxy-L-proline. The single multifunctional NRPS ppzA is sufficient to produce peramine via condensation of 1-pyrroline-5-carboxylate and arginine, N-methylation of the alpha-amino group of arginine and reduction of the thioester and the cyclization to form an iminium ion resulting in release from the peptide synthetase. Deprotonation of this intermediate and oxidation of the pyrroline ring would give rise to peramine. In Epichloe species that produce only peramine, the peramine synthetase gene is not localized in a gene cluster, in contrast to Metarhizium species that contain additional pyrrolopyrazine biosynthesis genes. The 2-oxoglutarate-Fe(II) type oxidoreductase ppzC hydroxylates peramine to yield the newly identified compound 8-hydroxyperamine whereas ppzD converts L-proline into trans-4-hydroxy-L-proline, a precursor of peramine biosynthesis. The sequence is that of 2-oxoglutarate-Fe(II) type oxidoreductase ppzD (ppzD) from Metarhizium majus (strain ARSEF 297).